A 144-amino-acid chain; its full sequence is Large ribosomal subunit protein uL15 (144 aa).

A disordered region spans residues 1 to 49; it reads MRLNTLSPAAGAKSAAKRVGRGIGSGTGKTCGRGHKGQKSRSGGGVRVG. A compositionally biased stretch (gly residues) spans 21 to 31; that stretch reads RGIGSGTGKTC.

It belongs to the universal ribosomal protein uL15 family. In terms of assembly, part of the 50S ribosomal subunit.

Its function is as follows. Binds to the 23S rRNA. This Shewanella halifaxensis (strain HAW-EB4) protein is Large ribosomal subunit protein uL15.